A 112-amino-acid polypeptide reads, in one-letter code: T cell receptor alpha variable 17 (112 aa).

An N-terminal signal peptide occupies residues 1-21; the sequence is METLLGVSLVILWLQLARVNS. Positions 22–112 constitute an Ig-like domain; sequence QQGEEDPQAL…DTASYFCATD (91 aa). N-linked (GlcNAc...) asparagine glycans are attached at residues asparagine 38 and asparagine 42. A disulfide bridge links cysteine 43 with cysteine 109.

In terms of assembly, alpha-beta TR is a heterodimer composed of an alpha and beta chain; disulfide-linked. The alpha-beta TR is associated with the transmembrane signaling CD3 coreceptor proteins to form the TR-CD3 (TcR or TCR). The assembly of alpha-beta TR heterodimers with CD3 occurs in the endoplasmic reticulum where a single alpha-beta TR heterodimer associates with one CD3D-CD3E heterodimer, one CD3G-CD3E heterodimer and one CD247 homodimer forming a stable octameric structure. CD3D-CD3E and CD3G-CD3E heterodimers preferentially associate with TR alpha and TR beta chains, respectively. The association of the CD247 homodimer is the last step of TcR assembly in the endoplasmic reticulum and is required for transport to the cell surface.

It localises to the cell membrane. In terms of biological role, v region of the variable domain of T cell receptor (TR) alpha chain that participates in the antigen recognition. Alpha-beta T cell receptors are antigen specific receptors which are essential to the immune response and are present on the cell surface of T lymphocytes. Recognize peptide-major histocompatibility (MH) (pMH) complexes that are displayed by antigen presenting cells (APC), a prerequisite for efficient T cell adaptive immunity against pathogens. Binding of alpha-beta TR to pMH complex initiates TR-CD3 clustering on the cell surface and intracellular activation of LCK that phosphorylates the ITAM motifs of CD3G, CD3D, CD3E and CD247 enabling the recruitment of ZAP70. In turn ZAP70 phosphorylates LAT, which recruits numerous signaling molecules to form the LAT signalosome. The LAT signalosome propagates signal branching to three major signaling pathways, the calcium, the mitogen-activated protein kinase (MAPK) kinase and the nuclear factor NF-kappa-B (NF-kB) pathways, leading to the mobilization of transcription factors that are critical for gene expression and essential for T cell growth and differentiation. The T cell repertoire is generated in the thymus, by V-(D)-J rearrangement. This repertoire is then shaped by intrathymic selection events to generate a peripheral T cell pool of self-MH restricted, non-autoaggressive T cells. Post-thymic interaction of alpha-beta TR with the pMH complexes shapes TR structural and functional avidity. The polypeptide is T cell receptor alpha variable 17 (Homo sapiens (Human)).